The chain runs to 273 residues: Dermonecrotic toxin LdSicTox-alphaIB1aii (273 aa).

His-5 is a catalytic residue. Glu-25 and Asp-27 together coordinate Mg(2+). The active-site Nucleophile is His-41. 2 disulfides stabilise this stretch: Cys-45-Cys-51 and Cys-47-Cys-190. Asp-85 contributes to the Mg(2+) binding site. N-linked (GlcNAc...) asparagine glycosylation is present at Asn-250.

It belongs to the arthropod phospholipase D family. Class II subfamily. It depends on Mg(2+) as a cofactor. In terms of tissue distribution, expressed by the venom gland.

It localises to the secreted. It carries out the reaction an N-(acyl)-sphingosylphosphocholine = an N-(acyl)-sphingosyl-1,3-cyclic phosphate + choline. It catalyses the reaction an N-(acyl)-sphingosylphosphoethanolamine = an N-(acyl)-sphingosyl-1,3-cyclic phosphate + ethanolamine. The enzyme catalyses a 1-acyl-sn-glycero-3-phosphocholine = a 1-acyl-sn-glycero-2,3-cyclic phosphate + choline. The catalysed reaction is a 1-acyl-sn-glycero-3-phosphoethanolamine = a 1-acyl-sn-glycero-2,3-cyclic phosphate + ethanolamine. Its function is as follows. Dermonecrotic toxins cleave the phosphodiester linkage between the phosphate and headgroup of certain phospholipids (sphingolipid and lysolipid substrates), forming an alcohol (often choline) and a cyclic phosphate. This toxin acts on sphingomyelin (SM). It may also act on ceramide phosphoethanolamine (CPE), lysophosphatidylcholine (LPC) and lysophosphatidylethanolamine (LPE), but not on lysophosphatidylserine (LPS), and lysophosphatidylglycerol (LPG). It acts by transphosphatidylation, releasing exclusively cyclic phosphate products as second products. Induces dermonecrosis, hemolysis, increased vascular permeability, edema, inflammatory response, and platelet aggregation. This chain is Dermonecrotic toxin LdSicTox-alphaIB1aii, found in Loxosceles deserta (Desert recluse spider).